The primary structure comprises 30 residues: 2-enoate reductase (30 aa).

As to quaternary structure, dodecamer; tetramer of trimers. Requires iron-sulfur cluster as cofactor. The cofactor is FAD. It depends on FMN as a cofactor.

The enzyme catalyses butanoate + NAD(+) = (2E)-2-butenoate + NADH + H(+). Its function is as follows. Involved in fermentation of amino acids (Stickland reaction) such as leucine, isoleucine, valine and phenylalanine. The protein is 2-enoate reductase of Clostridium tyrobutyricum.